A 218-amino-acid chain; its full sequence is Large ribosomal subunit protein uL3 (218 aa).

Belongs to the universal ribosomal protein uL3 family. As to quaternary structure, part of the 50S ribosomal subunit. Forms a cluster with proteins L14 and L19.

Its function is as follows. One of the primary rRNA binding proteins, it binds directly near the 3'-end of the 23S rRNA, where it nucleates assembly of the 50S subunit. This is Large ribosomal subunit protein uL3 from Corynebacterium efficiens (strain DSM 44549 / YS-314 / AJ 12310 / JCM 11189 / NBRC 100395).